Consider the following 363-residue polypeptide: Strychnine O-methyltransferase (363 aa).

Residues Gly204, Asp227, Asp249, Met250, and Lys263 each coordinate S-adenosyl-L-methionine. The active-site Proton acceptor is the His267.

Belongs to the class I-like SAM-binding methyltransferase superfamily. Cation-independent O-methyltransferase family.

It carries out the reaction 10-hydroxystrychnine + S-adenosyl-L-methionine = beta-colubrine + S-adenosyl-L-homocysteine + H(+). The catalysed reaction is 11-demethylbrucine + S-adenosyl-L-methionine = brucine + S-adenosyl-L-homocysteine + H(+). The protein operates within alkaloid biosynthesis. O-methyltransferase involved in the biosynthesis of curare monoterpene indole alkaloids (MIAs), natural products such as strychnine, a neurotoxic compound used as a pesticide to control rodents, and its pharmacologically active derivatives, including brucine, used to regulate blood pressure. Curare alkaloids act as animal glycine receptor antagonists. Catalyzes the conversion of 10-OH strychnine to beta-colubrine, and of 11-deMe brucine to brucine. In Strychnos nux-vomica (Poison nut), this protein is Strychnine O-methyltransferase.